We begin with the raw amino-acid sequence, 261 residues long: HTH-type transcriptional repressor CsqR (261 aa).

In terms of domain architecture, HTH deoR-type spans 8-63; it reads GNPRHDQLLMLIAERGYMNIDELANLLDVSTQTVRRDIRKLSEQGLITRHHGGAGR. The H-T-H motif DNA-binding region spans 25–44; it reads MNIDELANLLDVSTQTVRRD.

Monomer in the absence of DNA. Exhibits a high level of cooperativity once it is bound to its target DNA.

With respect to regulation, inactivated in the presence of the effectors sulfoquinovose and sulfoquinovosyl glycerol, leading to the de-repression of the target genes. Its function is as follows. Involved in the regulation of the sulfoquinovose operon. Represses the expression of the yihUTS operon and of the yihV and csqR genes. Binds DNA inside the spacer between the bidirectional transcription units comprising the yihUTS operon and the yihV gene, and upstream the csqR gene itself. This is HTH-type transcriptional repressor CsqR from Escherichia coli (strain K12).